The primary structure comprises 281 residues: Bis(5'-nucleosyl)-tetraphosphatase, symmetrical (281 aa).

The protein belongs to the Ap4A hydrolase family.

It catalyses the reaction P(1),P(4)-bis(5'-adenosyl) tetraphosphate + H2O = 2 ADP + 2 H(+). Functionally, hydrolyzes diadenosine 5',5'''-P1,P4-tetraphosphate to yield ADP. The protein is Bis(5'-nucleosyl)-tetraphosphatase, symmetrical of Delftia acidovorans (strain DSM 14801 / SPH-1).